The chain runs to 388 residues: (S)-8-oxocitronellyl enol synthase ISY1 (388 aa).

NADP(+) contacts are provided by residues 35 to 37 (TGI), 63 to 64 (RR), 81 to 82 (DV), 105 to 106 (TW), and Q143. Active-site residues include K147 and Y178. NADP(+)-binding positions include Y178, I205, and 212 to 214 (SMM).

It belongs to the short-chain dehydrogenases/reductases (SDR) family.

The catalysed reaction is (S)-8-oxocitronellyl enol + NADP(+) = (6E)-8-oxogeranial + NADPH + H(+). It catalyses the reaction (S)-8-oxocitronellyl enol + NAD(+) = (6E)-8-oxogeranial + NADH + H(+). Functionally, iridoid synthase that catalyzes the first step in generation of the iridoid ring scaffold using the linear monoterpene (6E)-8-oxogeranial as substrate. Iridoids comprise a large family of distinctive bicyclic monoterpenes that possess a wide range of pharmacological activities, including anticancer, anti-inflammatory, antifungal and antibacterial activities. Catalyzes the conversion of the linear monoterpene (6E)-8-oxogeranial to (S)-8-oxocitronellyl enol, a precursor of nepetalactones, which are metabolites that are both insect-repellent and have euphoric effect in cats. This is (S)-8-oxocitronellyl enol synthase ISY1 from Nepeta racemosa (Catmint).